A 206-amino-acid polypeptide reads, in one-letter code: Small ribosomal subunit protein uS4 (206 aa).

An S4 RNA-binding domain is found at glycine 96–lysine 156.

It belongs to the universal ribosomal protein uS4 family. As to quaternary structure, part of the 30S ribosomal subunit. Contacts protein S5. The interaction surface between S4 and S5 is involved in control of translational fidelity.

One of the primary rRNA binding proteins, it binds directly to 16S rRNA where it nucleates assembly of the body of the 30S subunit. In terms of biological role, with S5 and S12 plays an important role in translational accuracy. In Cronobacter sakazakii (strain ATCC BAA-894) (Enterobacter sakazakii), this protein is Small ribosomal subunit protein uS4.